Here is a 409-residue protein sequence, read N- to C-terminus: LysM domain-containing GPI-anchored protein LYP6 (409 aa).

A signal peptide spans 1–27 (MAGWPAAEAAGALVVAILAAAAGGAAG). Disulfide bonds link cysteine 34/cysteine 100, cysteine 40/cysteine 166, cysteine 98/cysteine 164, and cysteine 100/cysteine 166. The region spanning 110 to 160 (VRYSARPADTLASVADVVFAGLASADQIRTANGLSAEDPDAPLDAGATLVV) is the LysM 1 domain. Asparagine 168 carries an N-linked (GlcNAc...) asparagine glycan. One can recognise a LysM 2 domain in the interval 179-222 (LSYVVRVGDTVQSIAATHATTVTDISNVNAMGSPIVAPGDILAI). Intrachain disulfides connect cysteine 227–cysteine 259 and cysteine 254–cysteine 282. Asparagine 244 is a glycosylation site (N-linked (GlcNAc...) asparagine). N-linked (GlcNAc...) asparagine glycosylation is found at asparagine 291, asparagine 302, and asparagine 313. The disordered stretch occupies residues 353–387 (SPAPGAGEAGGDIPGFPGSSNVSPANGPSGSVSQA). A compositionally biased stretch (polar residues) spans 370 to 387 (GSSNVSPANGPSGSVSQA). The GPI-anchor amidated alanine moiety is linked to residue alanine 387. Residues 388–409 (ASVNRPHQIVALILSVALYFQM) constitute a propeptide, removed in mature form.

In terms of assembly, interacts with LYP4. Interacts with CERK1. Interacts with CEBIP. In terms of tissue distribution, expressed in roots and leaves.

Its subcellular location is the cell membrane. Its function is as follows. Functions in innate immunity. Functions as a pattern recognition receptor (PRR), sensing bacterial peptidoglycan (PGN) and fungal chitin at the cell surface. Involved in resistance against the bacterial pathogen Xanthomonas oryzae pv. oryzae (Xoo) and the fungal pathogen Magnaporthe oryzae. Binds PGN and fungal chitin in vitro. Involved in microbe-associated molecular patterns (MAMPs) perception and participates in the activation of defense genes against the bacterial pathogen Xanthomonas oryzae pv. oryzicola (Xoc) or the fungal pathogen Magnaporthe oryzae. The polypeptide is LysM domain-containing GPI-anchored protein LYP6 (Oryza sativa subsp. japonica (Rice)).